A 371-amino-acid chain; its full sequence is N-acetyldiaminopimelate deacetylase (371 aa).

The active site involves aspartate 68. Residue glutamate 127 is the Proton acceptor of the active site.

This sequence belongs to the peptidase M20A family. N-acetyldiaminopimelate deacetylase subfamily.

The enzyme catalyses N-acetyl-(2S,6S)-2,6-diaminopimelate + H2O = (2S,6S)-2,6-diaminopimelate + acetate. It participates in amino-acid biosynthesis; L-lysine biosynthesis via DAP pathway; LL-2,6-diaminopimelate from (S)-tetrahydrodipicolinate (acetylase route): step 3/3. In terms of biological role, catalyzes the conversion of N-acetyl-diaminopimelate to diaminopimelate and acetate. This Listeria monocytogenes serotype 4a (strain HCC23) protein is N-acetyldiaminopimelate deacetylase.